The following is a 317-amino-acid chain: tRNA-cytidine(32) 2-sulfurtransferase (317 aa).

Residues 63 to 68 carry the PP-loop motif motif; the sequence is SGGKDS. C138, C141, and C229 together coordinate [4Fe-4S] cluster.

Belongs to the TtcA family. In terms of assembly, homodimer. Mg(2+) serves as cofactor. [4Fe-4S] cluster is required as a cofactor.

It localises to the cytoplasm. It carries out the reaction cytidine(32) in tRNA + S-sulfanyl-L-cysteinyl-[cysteine desulfurase] + AH2 + ATP = 2-thiocytidine(32) in tRNA + L-cysteinyl-[cysteine desulfurase] + A + AMP + diphosphate + H(+). It participates in tRNA modification. Functionally, catalyzes the ATP-dependent 2-thiolation of cytidine in position 32 of tRNA, to form 2-thiocytidine (s(2)C32). The sulfur atoms are provided by the cysteine/cysteine desulfurase (IscS) system. The sequence is that of tRNA-cytidine(32) 2-sulfurtransferase from Janthinobacterium sp. (strain Marseille) (Minibacterium massiliensis).